The chain runs to 454 residues: Allantoinase (454 aa).

Residues histidine 58, histidine 60, lysine 149, histidine 189, histidine 245, and aspartate 318 each contribute to the Zn(2+) site. Lysine 149 is subject to N6-carboxylysine.

The protein belongs to the metallo-dependent hydrolases superfamily. Allantoinase family. In terms of assembly, homotetramer. Zn(2+) serves as cofactor. Carboxylation allows a single lysine to coordinate two zinc ions.

It carries out the reaction (S)-allantoin + H2O = allantoate + H(+). Its pathway is nitrogen metabolism; (S)-allantoin degradation; allantoate from (S)-allantoin: step 1/1. Its function is as follows. Catalyzes the conversion of allantoin (5-ureidohydantoin) to allantoic acid by hydrolytic cleavage of the five-member hydantoin ring. The protein is Allantoinase of Enterococcus faecalis (strain ATCC 700802 / V583).